Consider the following 133-residue polypeptide: Phosphoribosyl-AMP cyclohydrolase (133 aa).

D77 provides a ligand contact to Mg(2+). C78 provides a ligand contact to Zn(2+). Mg(2+) contacts are provided by D79 and D81. Zn(2+) contacts are provided by C95 and C102.

The protein belongs to the PRA-CH family. As to quaternary structure, homodimer. Mg(2+) is required as a cofactor. Zn(2+) serves as cofactor.

The protein localises to the cytoplasm. It catalyses the reaction 1-(5-phospho-beta-D-ribosyl)-5'-AMP + H2O = 1-(5-phospho-beta-D-ribosyl)-5-[(5-phospho-beta-D-ribosylamino)methylideneamino]imidazole-4-carboxamide. Its pathway is amino-acid biosynthesis; L-histidine biosynthesis; L-histidine from 5-phospho-alpha-D-ribose 1-diphosphate: step 3/9. Functionally, catalyzes the hydrolysis of the adenine ring of phosphoribosyl-AMP. The polypeptide is Phosphoribosyl-AMP cyclohydrolase (Azotobacter chroococcum mcd 1).